Here is a 152-residue protein sequence, read N- to C-terminus: Transcriptional regulator MraZ (152 aa).

2 SpoVT-AbrB domains span residues 5–52 (ASAV…PLNQ) and 81–124 (ATEC…SESE).

It belongs to the MraZ family. As to quaternary structure, forms oligomers.

The protein resides in the cytoplasm. The protein localises to the nucleoid. This chain is Transcriptional regulator MraZ, found in Histophilus somni (strain 129Pt) (Haemophilus somnus).